A 182-amino-acid chain; its full sequence is Transcription termination/antitermination protein NusG (182 aa).

The region spanning 131 to 163 is the KOW domain; that stretch reads VGEQVRIKSGPFANQVGEVQEIETDKFKLTVLV.

Belongs to the NusG family.

Functionally, participates in transcription elongation, termination and antitermination. In Staphylococcus aureus (strain NCTC 8325 / PS 47), this protein is Transcription termination/antitermination protein NusG.